The sequence spans 196 residues: MIVGLRGTIIRLEPMYAEIDVGGVIYGMQMSLNATSMLQTKIDSQPDAPVKIICAQIIREDAHLLFGFCEEIEKQTFERLIKISGVGPKVAIAILSTYTPTHFAKIIADKDIEALKKVPGIGVKGAAKIMVDIAGFFAQLLQSQEESIAPSNNLKYEASLALQSLGFKRNEIQKVLEHIEALSVSEIVKEALKRLA.

A domain I region spans residues 1-69 (MIVGLRGTII…EDAHLLFGFC (69 aa)). Residues 70-148 (EEIEKQTFER…QLLQSQEESI (79 aa)) are domain II. The tract at residues 149 to 157 (APSNNLKYE) is flexible linker. The domain III stretch occupies residues 157-196 (EASLALQSLGFKRNEIQKVLEHIEALSVSEIVKEALKRLA).

The protein belongs to the RuvA family. In terms of assembly, homotetramer. Forms an RuvA(8)-RuvB(12)-Holliday junction (HJ) complex. HJ DNA is sandwiched between 2 RuvA tetramers; dsDNA enters through RuvA and exits via RuvB. An RuvB hexamer assembles on each DNA strand where it exits the tetramer. Each RuvB hexamer is contacted by two RuvA subunits (via domain III) on 2 adjacent RuvB subunits; this complex drives branch migration. In the full resolvosome a probable DNA-RuvA(4)-RuvB(12)-RuvC(2) complex forms which resolves the HJ.

Its subcellular location is the cytoplasm. Its function is as follows. The RuvA-RuvB-RuvC complex processes Holliday junction (HJ) DNA during genetic recombination and DNA repair, while the RuvA-RuvB complex plays an important role in the rescue of blocked DNA replication forks via replication fork reversal (RFR). RuvA specifically binds to HJ cruciform DNA, conferring on it an open structure. The RuvB hexamer acts as an ATP-dependent pump, pulling dsDNA into and through the RuvAB complex. HJ branch migration allows RuvC to scan DNA until it finds its consensus sequence, where it cleaves and resolves the cruciform DNA. This is Holliday junction branch migration complex subunit RuvA from Helicobacter hepaticus (strain ATCC 51449 / 3B1).